A 337-amino-acid polypeptide reads, in one-letter code: Putative [LysW]-lysine/[LysW]-ornithine hydrolase (337 aa).

Residue histidine 67 participates in Zn(2+) binding. Aspartate 69 is an active-site residue. Position 91 (aspartate 91) interacts with Zn(2+). Glutamate 118 serves as the catalytic Proton acceptor. Glutamate 119, glutamate 140, and histidine 298 together coordinate Zn(2+).

This sequence belongs to the peptidase M20A family. LysK subfamily. Zn(2+) serves as cofactor. Co(2+) is required as a cofactor.

It is found in the cytoplasm. The catalysed reaction is [amino-group carrier protein]-C-terminal-gamma-(L-lysyl)-L-glutamate + H2O = [amino-group carrier protein]-C-terminal-L-glutamate + L-lysine. The enzyme catalyses [amino-group carrier protein]-C-terminal-gamma-(L-ornithyl)-L-glutamate + H2O = [amino-group carrier protein]-C-terminal-L-glutamate + L-ornithine. Its pathway is amino-acid biosynthesis; L-lysine biosynthesis via AAA pathway; L-lysine from L-alpha-aminoadipate (Thermus route): step 5/5. It functions in the pathway amino-acid biosynthesis; L-arginine biosynthesis. Its function is as follows. Catalyzes the release of L-lysine from [LysW]-gamma-L-lysine and the release of L-ornithine from [LysW]-L-ornithine. The protein is Putative [LysW]-lysine/[LysW]-ornithine hydrolase of Pyrococcus abyssi (strain GE5 / Orsay).